Here is a 262-residue protein sequence, read N- to C-terminus: Acyl-[acyl-carrier-protein]--UDP-N-acetylglucosamine O-acyltransferase (262 aa).

It belongs to the transferase hexapeptide repeat family. LpxA subfamily. In terms of assembly, homotrimer.

Its subcellular location is the cytoplasm. The enzyme catalyses a (3R)-hydroxyacyl-[ACP] + UDP-N-acetyl-alpha-D-glucosamine = a UDP-3-O-[(3R)-3-hydroxyacyl]-N-acetyl-alpha-D-glucosamine + holo-[ACP]. The protein operates within glycolipid biosynthesis; lipid IV(A) biosynthesis; lipid IV(A) from (3R)-3-hydroxytetradecanoyl-[acyl-carrier-protein] and UDP-N-acetyl-alpha-D-glucosamine: step 1/6. Involved in the biosynthesis of lipid A, a phosphorylated glycolipid that anchors the lipopolysaccharide to the outer membrane of the cell. This chain is Acyl-[acyl-carrier-protein]--UDP-N-acetylglucosamine O-acyltransferase, found in Vibrio atlanticus (strain LGP32) (Vibrio splendidus (strain Mel32)).